A 350-amino-acid polypeptide reads, in one-letter code: Protein-glutamate methylesterase/protein-glutamine glutaminase (350 aa).

The 118-residue stretch at 5–122 folds into the Response regulatory domain; sequence KVLCVDDSAL…RDGLIEYSEV (118 aa). Residue D56 is modified to 4-aspartylphosphate. Residues 152 to 346 form the CheB-type methylesterase domain; the sequence is PFASSEKLVI…ERILTRLGDR (195 aa). Catalysis depends on residues S165, H191, and D288.

Belongs to the CheB family. Phosphorylated by CheA. Phosphorylation of the N-terminal regulatory domain activates the methylesterase activity.

The protein localises to the cytoplasm. It catalyses the reaction [protein]-L-glutamate 5-O-methyl ester + H2O = L-glutamyl-[protein] + methanol + H(+). The enzyme catalyses L-glutaminyl-[protein] + H2O = L-glutamyl-[protein] + NH4(+). Involved in chemotaxis. Part of a chemotaxis signal transduction system that modulates chemotaxis in response to various stimuli. Catalyzes the demethylation of specific methylglutamate residues introduced into the chemoreceptors (methyl-accepting chemotaxis proteins or MCP) by CheR. Also mediates the irreversible deamidation of specific glutamine residues to glutamic acid. The chain is Protein-glutamate methylesterase/protein-glutamine glutaminase from Bordetella bronchiseptica (strain ATCC BAA-588 / NCTC 13252 / RB50) (Alcaligenes bronchisepticus).